The following is a 523-amino-acid chain: 2-isopropylmalate synthase (523 aa).

Positions 5-267 (VIIFDTTLRD…ETGINAKEIH (263 aa)) constitute a Pyruvate carboxyltransferase domain. Mn(2+) is bound by residues Asp14, His202, His204, and Asn238. The tract at residues 392–523 (KLQQLVVHSD…QQEKQVLGGV (132 aa)) is regulatory domain.

Belongs to the alpha-IPM synthase/homocitrate synthase family. LeuA type 1 subfamily. Homodimer. It depends on Mn(2+) as a cofactor.

Its subcellular location is the cytoplasm. The enzyme catalyses 3-methyl-2-oxobutanoate + acetyl-CoA + H2O = (2S)-2-isopropylmalate + CoA + H(+). It functions in the pathway amino-acid biosynthesis; L-leucine biosynthesis; L-leucine from 3-methyl-2-oxobutanoate: step 1/4. Functionally, catalyzes the condensation of the acetyl group of acetyl-CoA with 3-methyl-2-oxobutanoate (2-ketoisovalerate) to form 3-carboxy-3-hydroxy-4-methylpentanoate (2-isopropylmalate). This chain is 2-isopropylmalate synthase, found in Shewanella piezotolerans (strain WP3 / JCM 13877).